The primary structure comprises 599 residues: Kelch-like protein 41a (599 aa).

One can recognise a BTB domain in the interval V32–D102. Residues C137–E239 enclose the BACK domain. Kelch repeat units follow at residues L339–N391, L393–G440, L441–G488, K489–G535, and L537–L591.

The protein localises to the cytoplasm. It localises to the cytoskeleton. Its subcellular location is the sarcoplasmic reticulum membrane. The protein resides in the endoplasmic reticulum membrane. Functionally, involved in skeletal muscle development and differentiation. In Danio rerio (Zebrafish), this protein is Kelch-like protein 41a (klhl41a).